A 132-amino-acid polypeptide reads, in one-letter code: Outer membrane protein assembly factor BamE (132 aa).

A signal peptide spans 1 to 16 (MQKLVLTLLVTSLLAG). Residue Cys17 is the site of N-palmitoyl cysteine attachment. The S-diacylglycerol cysteine moiety is linked to residue Cys17.

Belongs to the BamE family. Part of the Bam complex.

It is found in the cell outer membrane. Part of the outer membrane protein assembly complex, which is involved in assembly and insertion of beta-barrel proteins into the outer membrane. In Acinetobacter pittii (strain PHEA-2), this protein is Outer membrane protein assembly factor BamE.